Consider the following 322-residue polypeptide: Probable arabinan endo-1,5-alpha-L-arabinosidase A (322 aa).

Positions 1–19 (MYLPTLAASASLLVGVAHG) are cleaved as a signal peptide. The active-site Proton acceptor is aspartate 34. Glutamate 201 (proton donor) is an active-site residue.

Belongs to the glycosyl hydrolase 43 family.

The protein resides in the secreted. The catalysed reaction is Endohydrolysis of (1-&gt;5)-alpha-arabinofuranosidic linkages in (1-&gt;5)-arabinans.. It functions in the pathway glycan metabolism; L-arabinan degradation. Its function is as follows. Endo-1,5-alpha-L-arabinanase involved in degradation of pectin. Its preferred substrate is linear 1,5-alpha-L-arabinan. In Emericella nidulans (strain FGSC A4 / ATCC 38163 / CBS 112.46 / NRRL 194 / M139) (Aspergillus nidulans), this protein is Probable arabinan endo-1,5-alpha-L-arabinosidase A (abnA).